The primary structure comprises 729 residues: Leucine-rich repeat flightless-interacting protein 1 (729 aa).

The residue at position 2 (T2) is an N-acetylthreonine. At S16 the chain carries Phosphoserine. Positions 40 to 65 (IRMKELERQQKEVEERPDKDFAEKGS) are enriched in basic and acidic residues. The interval 40–98 (IRMKELERQQKEVEERPDKDFAEKGSRNMPSLSAATLASLGGTSSRRGSGDTSISMDTE) is disordered. Low complexity predominate over residues 78 to 94 (SLGGTSSRRGSGDTSIS). Residues S83, S84, S88, D90, S92, and T97 each carry the phosphoserine modification. Residues 94–194 (SMDTEASIRE…LRQREEMLEK (101 aa)) adopt a coiled-coil conformation. K249 participates in a covalent cross-link: Glycyl lysine isopeptide (Lys-Gly) (interchain with G-Cter in SUMO1). The disordered stretch occupies residues 253-729 (VEKVGQRETL…SKSKEDCTMS (477 aa)). Over residues 260–272 (ETLQNSEQEQPKP) the composition is skewed to polar residues. A compositionally biased stretch (basic and acidic residues) spans 277–297 (DCVDRGVSHPGEKAENQRPAE). Residue S302 is modified to Phosphoserine. Positions 313–326 (QQVQSQDQENTSDL) are enriched in polar residues. Residues 327–343 (KNSEQIESHKVTNKSDS) are compositionally biased toward basic and acidic residues. A compositionally biased stretch (polar residues) spans 344–354 (RASNSPEQSSC). Residues S346 and S348 each carry the phosphoserine modification. Basic and acidic residues-rich tracts occupy residues 435–445 (KGTENHGESCL) and 482–494 (KADDAEGRDEKPI). Residues 465–567 (EEAIVQIPQA…KNKKKKAATP (103 aa)) form a DNA-binding region. A compositionally biased stretch (polar residues) spans 506–523 (INQSGHQDTTGPGSTDAQ). S538 and S547 each carry phosphoserine. A compositionally biased stretch (basic residues) spans 550 to 564 (KKTKNKKKKNKKKKA). Positions 608 to 618 (QKIRAGSREPV) are enriched in basic and acidic residues. 2 positions are modified to phosphoserine: S614 and S670. 2 stretches are compositionally biased toward polar residues: residues 667–684 (CDTSQIGSEEGHVTSQHG) and 693–710 (LDNSDLSGQLEGFNSESG). A compositionally biased stretch (basic and acidic residues) spans 713–729 (AREEVGNSKSKEDCTMS).

It belongs to the LRRFIP family. Homodimer. May also form higher oligomers. Interacts with FLII. Interacts with MYD88. Competes with FLII for MyD88-binding, even in the absence of LPS. In terms of tissue distribution, ubiquitously expressed.

The protein localises to the nucleus. It localises to the cytoplasm. In terms of biological role, transcriptional repressor which preferentially binds to the GC-rich consensus sequence (5'-AGCCCCCGGCG-3') and may regulate expression of TNF, EGFR and PDGFA. May control smooth muscle cells proliferation following artery injury through PDGFA repression. May also bind double-stranded RNA. Positively regulates Toll-like receptor (TLR) signaling in response to agonist probably by competing with the negative FLII regulator for MYD88-binding. This is Leucine-rich repeat flightless-interacting protein 1 (Lrrfip1) from Mus musculus (Mouse).